A 438-amino-acid chain; its full sequence is Aspartate--tRNA(Asp/Asn) ligase (438 aa).

Glutamate 176 contacts L-aspartate. Residues 198 to 201 (QLYK) form an aspartate region. Arginine 220 contacts L-aspartate. ATP contacts are provided by residues 220-222 (RAE), 228-230 (RHL), and glutamate 361. Residues glutamate 361 and serine 364 each contribute to the Mg(2+) site. Residues serine 364 and arginine 368 each contribute to the L-aspartate site. 409–412 (GADR) is a binding site for ATP.

Belongs to the class-II aminoacyl-tRNA synthetase family. Type 2 subfamily. As to quaternary structure, homodimer. It depends on Mg(2+) as a cofactor.

The protein localises to the cytoplasm. The catalysed reaction is tRNA(Asx) + L-aspartate + ATP = L-aspartyl-tRNA(Asx) + AMP + diphosphate. Functionally, aspartyl-tRNA synthetase with relaxed tRNA specificity since it is able to aspartylate not only its cognate tRNA(Asp) but also tRNA(Asn). Reaction proceeds in two steps: L-aspartate is first activated by ATP to form Asp-AMP and then transferred to the acceptor end of tRNA(Asp/Asn). The chain is Aspartate--tRNA(Asp/Asn) ligase from Methanocaldococcus jannaschii (strain ATCC 43067 / DSM 2661 / JAL-1 / JCM 10045 / NBRC 100440) (Methanococcus jannaschii).